The following is a 631-amino-acid chain: Transmembrane and coiled-coil domain-containing protein 4 (631 aa).

Residues 1–26 (MATWNRPHPRLPVAPEPVAEGESQQP) are disordered. Residues 153–183 (EEVFLESLKDAKEEESETAEESRKRKEKRRK) adopt a coiled-coil conformation. The next 4 membrane-spanning stretches (helical) occupy residues 187 to 203 (YLLIGLATVGGGTVIGV), 204 to 220 (TGGLAAPLVAAGAATII), 228 to 248 (LGSVAGIAVMTSLFGAAGAGL), and 343 to 363 (LSGIVAALTLPASLLSVANVI). A disordered region spans residues 523-631 (WSEKGLPLAP…ETQESCAELD (109 aa)). Residues 571–590 (IPSSASQAQVPAGLDQSTED) are compositionally biased toward polar residues.

The protein belongs to the TMCO4 family.

Its subcellular location is the membrane. The polypeptide is Transmembrane and coiled-coil domain-containing protein 4 (Tmco4) (Rattus norvegicus (Rat)).